Consider the following 271-residue polypeptide: Phosphate import ATP-binding protein PstB (271 aa).

The region spanning 25–266 (FDTKNLNLWY…PSDKRTEDYI (242 aa)) is the ABC transporter domain. Residue 57–64 (GPSGCGKS) coordinates ATP.

The protein belongs to the ABC transporter superfamily. Phosphate importer (TC 3.A.1.7) family. In terms of assembly, the complex is composed of two ATP-binding proteins (PstB), two transmembrane proteins (PstC and PstA) and a solute-binding protein (PstS).

Its subcellular location is the cell membrane. The catalysed reaction is phosphate(out) + ATP + H2O = ADP + 2 phosphate(in) + H(+). In terms of biological role, part of the ABC transporter complex PstSACB involved in phosphate import. Responsible for energy coupling to the transport system. This chain is Phosphate import ATP-binding protein PstB, found in Bacillus cereus (strain ATCC 14579 / DSM 31 / CCUG 7414 / JCM 2152 / NBRC 15305 / NCIMB 9373 / NCTC 2599 / NRRL B-3711).